We begin with the raw amino-acid sequence, 346 residues long: Phosphoribosylformylglycinamidine cyclo-ligase (346 aa).

This sequence belongs to the AIR synthase family.

It is found in the cytoplasm. The enzyme catalyses 2-formamido-N(1)-(5-O-phospho-beta-D-ribosyl)acetamidine + ATP = 5-amino-1-(5-phospho-beta-D-ribosyl)imidazole + ADP + phosphate + H(+). It participates in purine metabolism; IMP biosynthesis via de novo pathway; 5-amino-1-(5-phospho-D-ribosyl)imidazole from N(2)-formyl-N(1)-(5-phospho-D-ribosyl)glycinamide: step 2/2. In Photobacterium profundum (strain SS9), this protein is Phosphoribosylformylglycinamidine cyclo-ligase.